The following is a 103-amino-acid chain: uncharacterized protein (103 aa).

This is an uncharacterized protein from Haemophilus influenzae (strain ATCC 51907 / DSM 11121 / KW20 / Rd).